The following is a 277-amino-acid chain: MGIKVYKPTTNGRRNMTSLDFAEITTSTPEKSLLVALKSKAGRNNNGRITVRHQGGGHKRFYRLVDFKRNKDGVEAIVKTIEYDPNRSANIALVHYTDGVKAYIIAPKGLEVGQRIVSGPEADIKVGNALPLANIPVGTVVHNIELKPGRGGELVRAAGASAQVLGQEGKYVLVRLQSGEVRMILGTCRATVGTVGNEQHGLVNLGKAGRSRWKGIRPTVRGSVMNPNDHPHGGGEGKAPVGRKAPSTPWGKPALGLKTRNKKAKSDKLIVRRRNQK.

The disordered stretch occupies residues 219–277; sequence TVRGSVMNPNDHPHGGGEGKAPVGRKAPSTPWGKPALGLKTRNKKAKSDKLIVRRRNQK.

The protein belongs to the universal ribosomal protein uL2 family. As to quaternary structure, part of the 50S ribosomal subunit. Forms a bridge to the 30S subunit in the 70S ribosome.

One of the primary rRNA binding proteins. Required for association of the 30S and 50S subunits to form the 70S ribosome, for tRNA binding and peptide bond formation. It has been suggested to have peptidyltransferase activity; this is somewhat controversial. Makes several contacts with the 16S rRNA in the 70S ribosome. In Streptococcus suis (strain 98HAH33), this protein is Large ribosomal subunit protein uL2.